The following is a 263-amino-acid chain: 7beta-hydroxysteroid dehydrogenase (263 aa).

NADP(+)-binding positions include 17 to 21, 40 to 41, and 66 to 67; these read TEGVG, RR, and DF. Tyrosine 156 acts as the Proton acceptor in catalysis. An NADP(+)-binding site is contributed by serine 240.

This sequence belongs to the short-chain dehydrogenases/reductases (SDR) family.

The catalysed reaction is a 7beta-hydroxysteroid + NADP(+) = a 7-oxosteroid + NADPH + H(+). It catalyses the reaction 7-oxolithocholate + NADPH + H(+) = ursodeoxycholate + NADP(+). 7beta-hydroxysteroid dehydrogenase that catalyzes the reduction of the 7-oxo group of 7-oxo-lithocholate (7-oxo-LCA), to yield ursodeoxycholate (UDCA). As R.gnavus is a common core bacterium of the human gut microbiota, this enzyme contributes to the formation of UDCA in the human colon. UDCA is regarded as a chemopreventive beneficial secondary bile acid due to its low hydrophobicity; it protects hepatocytes and bile duct epithelial cells against necrosis and apoptosis induced by more hydrophobic secondary bile acids like deoxycholate (DCA). This enzyme is also able to catalyze the reverse reaction in vitro, i.e. the oxidation of the 7beta-hydroxy group of UDCA to 7-oxo-LCA, but much less efficiently than the reduction reaction. This chain is 7beta-hydroxysteroid dehydrogenase, found in Mediterraneibacter gnavus (strain ATCC 29149 / DSM 114966 / JCM 6515 / VPI C7-9) (Ruminococcus gnavus).